A 117-amino-acid chain; its full sequence is Non-specific lipid-transfer protein (117 aa).

The first 26 residues, 1 to 26, serve as a signal peptide directing secretion; that stretch reads MASSAFVKFTCALVMCMMVAAPLAEA. Cystine bridges form between Cys-29-Cys-76, Cys-39-Cys-53, Cys-54-Cys-99, and Cys-74-Cys-113.

It belongs to the plant LTP family.

In terms of biological role, plant non-specific lipid-transfer proteins transfer phospholipids as well as galactolipids across membranes. May play a role in wax or cutin deposition in the cell walls of expanding epidermal cells and certain secretory tissues. Also has fungicide activity. This is Non-specific lipid-transfer protein (IWF1') from Beta vulgaris (Sugar beet).